The primary structure comprises 446 residues: Probable glycine dehydrogenase (decarboxylating) subunit 1 (446 aa).

It belongs to the GcvP family. N-terminal subunit subfamily. The glycine cleavage system is composed of four proteins: P, T, L and H. In this organism, the P 'protein' is a heterodimer of two subunits.

It catalyses the reaction N(6)-[(R)-lipoyl]-L-lysyl-[glycine-cleavage complex H protein] + glycine + H(+) = N(6)-[(R)-S(8)-aminomethyldihydrolipoyl]-L-lysyl-[glycine-cleavage complex H protein] + CO2. In terms of biological role, the glycine cleavage system catalyzes the degradation of glycine. The P protein binds the alpha-amino group of glycine through its pyridoxal phosphate cofactor; CO(2) is released and the remaining methylamine moiety is then transferred to the lipoamide cofactor of the H protein. This Thermococcus onnurineus (strain NA1) protein is Probable glycine dehydrogenase (decarboxylating) subunit 1.